An 874-amino-acid chain; its full sequence is Alanine--tRNA ligase (874 aa).

His564, His568, Cys665, and His669 together coordinate Zn(2+).

The protein belongs to the class-II aminoacyl-tRNA synthetase family. Zn(2+) is required as a cofactor.

It is found in the cytoplasm. It carries out the reaction tRNA(Ala) + L-alanine + ATP = L-alanyl-tRNA(Ala) + AMP + diphosphate. Functionally, catalyzes the attachment of alanine to tRNA(Ala) in a two-step reaction: alanine is first activated by ATP to form Ala-AMP and then transferred to the acceptor end of tRNA(Ala). Also edits incorrectly charged Ser-tRNA(Ala) and Gly-tRNA(Ala) via its editing domain. This is Alanine--tRNA ligase from Burkholderia vietnamiensis (strain G4 / LMG 22486) (Burkholderia cepacia (strain R1808)).